The sequence spans 458 residues: Argininosuccinate lyase (458 aa).

This sequence belongs to the lyase 1 family. Argininosuccinate lyase subfamily.

The protein resides in the cytoplasm. The enzyme catalyses 2-(N(omega)-L-arginino)succinate = fumarate + L-arginine. Its pathway is amino-acid biosynthesis; L-arginine biosynthesis; L-arginine from L-ornithine and carbamoyl phosphate: step 3/3. This chain is Argininosuccinate lyase, found in Glaesserella parasuis serovar 5 (strain SH0165) (Haemophilus parasuis).